Reading from the N-terminus, the 87-residue chain is U3-theraphotoxin-Hhn1a 8 (87 aa).

The N-terminal stretch at 1–24 (MVNMKASMFLTFAGLVLLFVVCYA) is a signal peptide. The propeptide occupies 25-52 (SGSEEKEFPKEMLSSIFAVDNDFKQEER). 3 cysteine pairs are disulfide-bonded: cysteine 54–cysteine 67, cysteine 61–cysteine 72, and cysteine 66–cysteine 79.

It belongs to the neurotoxin 10 (Hwtx-1) family. 51 (Hntx-8) subfamily. Hntx-8 sub-subfamily. As to expression, expressed by the venom gland.

The protein resides in the secreted. Its function is as follows. Ion channel inhibitor. This chain is U3-theraphotoxin-Hhn1a 8, found in Cyriopagopus hainanus (Chinese bird spider).